The following is a 318-amino-acid chain: NADH-ubiquinone oxidoreductase chain 1 (318 aa).

8 helical membrane-spanning segments follow: residues 3–23 (LITL…LTLV), 70–90 (MFII…TPLP), 100–120 (LGIL…LWSG), 146–166 (LAII…TTLI), 171–191 (YIWL…STLA), 222–242 (LFFL…TILF), 254–273 (LYTT…FLWI), and 294–314 (LPLT…LASI).

The protein belongs to the complex I subunit 1 family.

It is found in the mitochondrion inner membrane. It carries out the reaction a ubiquinone + NADH + 5 H(+)(in) = a ubiquinol + NAD(+) + 4 H(+)(out). In terms of biological role, core subunit of the mitochondrial membrane respiratory chain NADH dehydrogenase (Complex I) that is believed to belong to the minimal assembly required for catalysis. Complex I functions in the transfer of electrons from NADH to the respiratory chain. The immediate electron acceptor for the enzyme is believed to be ubiquinone. The chain is NADH-ubiquinone oxidoreductase chain 1 (MT-ND1) from Phyllostomus elongatus (Lesser spear-nosed bat).